Consider the following 473-residue polypeptide: G2/mitotic-specific cyclin-1 (473 aa).

A compositionally biased stretch (polar residues) spans 1-12 (MGSRNIVQQQNR). Disordered stretches follow at residues 1 to 23 (MGSR…AMKQ) and 134 to 155 (KEKP…APTL). Residues 134-147 (KEKPIEKEKAAEKS) show a composition bias toward basic and acidic residues.

This sequence belongs to the cyclin family. Cyclin AB subfamily. As to quaternary structure, interacts with the CDC2 and CDK2 protein kinases to form a serine/threonine kinase holoenzyme complex. The cyclin subunit imparts substrate specificity to the complex.

Its function is as follows. Essential for the control of the cell cycle at the G2/M (mitosis) transition. G2/M cyclins accumulate steadily during G2 and are abruptly destroyed at mitosis. The polypeptide is G2/mitotic-specific cyclin-1 (Antirrhinum majus (Garden snapdragon)).